The chain runs to 542 residues: Phosphoacetylglucosamine mutase (542 aa).

Methionine 1 is subject to N-acetylmethionine. Position 62 is a phosphothreonine (threonine 62). Serine 64 functions as the Phosphoserine intermediate in the catalytic mechanism. Mg(2+)-binding residues include serine 64, aspartate 276, aspartate 278, and aspartate 280. Serine 64 bears the Phosphoserine mark. Substrate is bound by residues 370-372 (EAN), 496-500 (RPSGT), and arginine 505.

This sequence belongs to the phosphohexose mutase family. The cofactor is Mg(2+).

It catalyses the reaction N-acetyl-alpha-D-glucosamine 1-phosphate = N-acetyl-D-glucosamine 6-phosphate. The protein operates within nucleotide-sugar biosynthesis; UDP-N-acetyl-alpha-D-glucosamine biosynthesis; N-acetyl-alpha-D-glucosamine 1-phosphate from alpha-D-glucosamine 6-phosphate (route I): step 2/2. Its function is as follows. Catalyzes the conversion of GlcNAc-6-P into GlcNAc-1-P during the synthesis of uridine diphosphate/UDP-GlcNAc, a sugar nucleotide critical to multiple glycosylation pathways including protein N- and O-glycosylation. The sequence is that of Phosphoacetylglucosamine mutase from Mus musculus (Mouse).